The following is a 300-amino-acid chain: Auxin-responsive protein IAA7 (300 aa).

2 disordered regions span residues 1–80 and 92–125; these read MGEA…DGDK and VSHS…LASN. Residues 43-47 carry the EAR-like (transcriptional repression) motif; that stretch reads LSLGL. Residues 92–103 are compositionally biased toward polar residues; the sequence is VSHSQGKANKNK. A PB1 domain is found at 177-281; that stretch reads APFIKINMDG…SVKRLRVLKT (105 aa).

This sequence belongs to the Aux/IAA family. As to quaternary structure, homodimers and heterodimers. Expressed at low levels in roots and shoots.

It localises to the nucleus. In terms of biological role, aux/IAA proteins are short-lived transcriptional factors that function as repressors of early auxin response genes at low auxin concentrations. This is Auxin-responsive protein IAA7 (IAA7) from Oryza sativa subsp. japonica (Rice).